Consider the following 377-residue polypeptide: Flagellar P-ring protein (377 aa).

Residues 1 to 33 (MRYPVSTGIAAPAWFAFFCAWAGLWTFSLPVQA) form the signal peptide.

This sequence belongs to the FlgI family. As to quaternary structure, the basal body constitutes a major portion of the flagellar organelle and consists of four rings (L,P,S, and M) mounted on a central rod.

It is found in the periplasm. Its subcellular location is the bacterial flagellum basal body. Functionally, assembles around the rod to form the L-ring and probably protects the motor/basal body from shearing forces during rotation. This Nitrosospira multiformis (strain ATCC 25196 / NCIMB 11849 / C 71) protein is Flagellar P-ring protein.